Consider the following 1220-residue polypeptide: Protein transport protein Sec31A (1220 aa).

7 WD repeats span residues 4 to 47, 68 to 111, 120 to 160, 166 to 206, 209 to 254, 258 to 298, and 301 to 342; these read KEVD…EIFE, RYHK…AGDK, KHTG…TPMT, QPPE…PIIK, DHSN…SPLR, NHAR…VLYE, and TNTQ…DGLR. The interaction with SEC13 stretch occupies residues 161–471; it reads PGAKTQPPED…IDASQTEFEK (311 aa). The WD 8; interaction with SEC13 repeat unit spans residues 397–430; it reads SFSFGGKLVTFENVRMPSHQGAEQQQQQHHVFIS. A phosphoserine mark is found at Ser-527 and Ser-532. Lys-647 participates in a covalent cross-link: Glycyl lysine isopeptide (Lys-Gly) (interchain with G-Cter in ubiquitin). Disordered regions lie at residues 791 to 908 and 924 to 1096; these read GEPV…NAYP and QLYA…GNTF. Ser-799 carries the post-translational modification Phosphoserine. The segment at 800–1113 is interaction with PDCD6; that stretch reads PKIPYEKQQL…TKKITKKPIP (314 aa). An ALG-2-binding site motif-2 (ABS-2) motif is present at residues 842 to 848; sequence GFIMHGN. Polar residues predominate over residues 849–859; the sequence is VNPNAAGQLPT. Residues 869–882 are compositionally biased toward pro residues; sequence PPYPQPQPYQPAQP. Positions 962–972 are enriched in low complexity; it reads PSSSAYALPPG. 2 stretches are compositionally biased toward polar residues: residues 984-995 and 1031-1053; these read PASQRTGPQNGW and PQSQ…SSFP. Thr-1161 carries the post-translational modification Phosphothreonine. Ser-1163 is modified (phosphoserine). Lys-1217 is covalently cross-linked (Glycyl lysine isopeptide (Lys-Gly) (interchain with G-Cter in ubiquitin)).

The protein belongs to the WD repeat SEC31 family. In terms of assembly, COPII is composed of at least 5 proteins: the SEC23/24 complex, the SEC13/31 complex and SAR1. SEC13 and SEC31 make a 2:2 tetramer that forms the edge element of the COPII outer coat. The tetramer self-assembles in multiple copies to form the complete polyhedral cage. Interacts (via WD 8) with SEC13. Interacts with PDCD6; interaction takes place in response to cytosolic calcium increase and leads to bridge together the BCR(KLHL12) complex and SEC31A, leading to monoubiquitination. Interacts with KLHL12. In terms of processing, monoubiquitinated by the BCR(KLHL12) E3 ubiquitin ligase complex, leading to regulate the size of COPII coats. Abundantly and ubiquitously expressed.

Its subcellular location is the cytoplasm. It is found in the cytoplasmic vesicle. The protein localises to the COPII-coated vesicle membrane. The protein resides in the endoplasmic reticulum membrane. It localises to the cytosol. In terms of biological role, component of the coat protein complex II (COPII) which promotes the formation of transport vesicles from the endoplasmic reticulum (ER). The coat has two main functions, the physical deformation of the endoplasmic reticulum membrane into vesicles and the selection of cargo molecules. The protein is Protein transport protein Sec31A (SEC31A) of Homo sapiens (Human).